The chain runs to 108 residues: Putative transmembrane protein ORF108 (108 aa).

A run of 3 helical transmembrane segments spans residues 11–31, 33–53, and 69–89; these read FIMG…SSII, IAMT…TVHF, and VGFL…LLII.

Its subcellular location is the host membrane. This is Putative transmembrane protein ORF108 from Acidianus hospitalis (AFV-1).